The primary structure comprises 104 residues: Flagellar hook-basal body complex protein FliE (104 aa).

The protein belongs to the FliE family.

It is found in the bacterial flagellum basal body. The polypeptide is Flagellar hook-basal body complex protein FliE (Salmonella newport (strain SL254)).